Reading from the N-terminus, the 208-residue chain is Mediator of RNA polymerase II transcription subunit 18 (208 aa).

This sequence belongs to the Mediator complex subunit 18 family. As to quaternary structure, component of the Mediator complex.

Its subcellular location is the nucleus. Component of the Mediator complex, a coactivator involved in the regulated transcription of nearly all RNA polymerase II-dependent genes. Mediator functions as a bridge to convey information from gene-specific regulatory proteins to the basal RNA polymerase II transcription machinery. Mediator is recruited to promoters by direct interactions with regulatory proteins and serves as a scaffold for the assembly of a functional preinitiation complex with RNA polymerase II and the general transcription factors. The sequence is that of Mediator of RNA polymerase II transcription subunit 18 (med18) from Xenopus tropicalis (Western clawed frog).